The primary structure comprises 329 residues: Flotillin-like protein FloA (329 aa).

A helical membrane pass occupies residues 4-24 (IWGFLILILVLIFLGVFFSFV).

The protein belongs to the flotillin-like FloA family. In terms of assembly, homooligomerizes.

The protein localises to the cell membrane. Its subcellular location is the membrane raft. Found in functional membrane microdomains (FMM) that may be equivalent to eukaryotic membrane rafts. FMMs are highly dynamic and increase in number as cells age. Flotillins are thought to be important factors in membrane fluidity. The sequence is that of Flotillin-like protein FloA from Dictyoglomus turgidum (strain DSM 6724 / Z-1310).